A 491-amino-acid polypeptide reads, in one-letter code: Glutamyl-tRNA(Gln) amidotransferase subunit A (491 aa).

Active-site charge relay system residues include Lys79 and Ser158. The active-site Acyl-ester intermediate is the Ser182.

It belongs to the amidase family. GatA subfamily. Heterotrimer of A, B and C subunits.

The enzyme catalyses L-glutamyl-tRNA(Gln) + L-glutamine + ATP + H2O = L-glutaminyl-tRNA(Gln) + L-glutamate + ADP + phosphate + H(+). In terms of biological role, allows the formation of correctly charged Gln-tRNA(Gln) through the transamidation of misacylated Glu-tRNA(Gln) in organisms which lack glutaminyl-tRNA synthetase. The reaction takes place in the presence of glutamine and ATP through an activated gamma-phospho-Glu-tRNA(Gln). The polypeptide is Glutamyl-tRNA(Gln) amidotransferase subunit A (Anaplasma phagocytophilum (strain HZ)).